The primary structure comprises 312 residues: Heterotepalin-4 (312 aa).

An N-terminal signal peptide occupies residues 1 to 22 (MKSMLVVTISVWLILAPTSTWA). Intrachain disulfides connect Cys-56–Cys-280 and Cys-107–Cys-128. Glu-197 is an active-site residue. The propeptide occupies 284-312 (YNQNAMFPQLIMSTYYNYMANLGDLFEEF).

It catalyses the reaction Endohydrolysis of the N-glycosidic bond at one specific adenosine on the 28S rRNA.. Functionally, inhibits protein synthesis in vitro. The sequence is that of Heterotepalin-4 from Phytolacca heterotepala (Mexican pokeweed).